The sequence spans 269 residues: Chromosome-partitioning protein Spo0J (269 aa).

The interval 1-20 (MSRKPSGLGRGLEALLPKTG) is stimulates ATPase activity of Soj by 8%. The H-T-H motif DNA-binding region spans 137–156 (QEEVARRVGKARSTVANALR). The interval 223–269 (PSPLSLELSRHLGLPVRVVGGKKGKVVIQYRSLEELEALLRRLGYQA) is required for DNA-binding; may be responsible for dimerization.

The protein belongs to the ParB family. In terms of assembly, homodimer, probably via the C-terminal 46 residues. Dimerization of the N-terminal H-T-H region may require DNA-binding. Probably interacts with ATPase Soj.

Probably involved in chromosome partitioning. Binds to a plasmid centromere-like site parS. Stimulates the ATPase activity 10-fold of Soj; the first 20 residues may be responsible. The chain is Chromosome-partitioning protein Spo0J (spo0C) from Thermus thermophilus (strain ATCC BAA-163 / DSM 7039 / HB27).